We begin with the raw amino-acid sequence, 149 residues long: Calmodulin (149 aa).

The residue at position 2 (Ala-2) is an N-acetylalanine. EF-hand domains are found at residues Glu-8–Asn-43, Pro-44–Asp-79, Asp-81–Lys-116, and Leu-117–Lys-149. Ca(2+)-binding residues include Asp-21, Asp-23, Asp-25, Thr-27, Glu-32, Asp-57, Asp-59, Asn-61, Thr-63, Glu-68, Asp-94, Asp-96, Asn-98, and Glu-105. The residue at position 116 (Lys-116) is an N6,N6,N6-trimethyllysine. 5 residues coordinate Ca(2+): Asp-130, Asp-132, Asp-134, Gln-136, and Glu-141.

This sequence belongs to the calmodulin family.

Calmodulin mediates the control of a large number of enzymes, ion channels and other proteins by Ca(2+). Among the enzymes to be stimulated by the calmodulin-Ca(2+) complex are a number of protein kinases and phosphatases. The polypeptide is Calmodulin (Ciona intestinalis (Transparent sea squirt)).